Reading from the N-terminus, the 414-residue chain is Histidine--tRNA ligase (414 aa).

This sequence belongs to the class-II aminoacyl-tRNA synthetase family. Homodimer.

The protein localises to the cytoplasm. It catalyses the reaction tRNA(His) + L-histidine + ATP = L-histidyl-tRNA(His) + AMP + diphosphate + H(+). In Rickettsia conorii (strain ATCC VR-613 / Malish 7), this protein is Histidine--tRNA ligase.